Consider the following 399-residue polypeptide: PCI domain-containing protein 2 (399 aa).

The 182-residue stretch at 210-391 (VTFKYYVGRK…QKLVVSKQNP (182 aa)) folds into the PCI domain.

The protein belongs to the CSN12 family.

The sequence is that of PCI domain-containing protein 2 (pcid2) from Xenopus laevis (African clawed frog).